The primary structure comprises 371 residues: dTDP-4-amino-4,6-dideoxy-D-glucose transaminase (371 aa).

An N6-(pyridoxal phosphate)lysine modification is found at Lys-186.

It belongs to the DegT/DnrJ/EryC1 family. The cofactor is pyridoxal 5'-phosphate.

The enzyme catalyses dTDP-4-amino-4,6-dideoxy-D-glucose + 2-oxoglutarate = dTDP-4-dehydro-6-deoxy-alpha-D-glucose + L-glutamate. It functions in the pathway bacterial outer membrane biogenesis; lipopolysaccharide biosynthesis. Its function is as follows. Catalyzes the conversion of dTDP-4-dehydro-6-deoxy-D-glucose (dTDP-D-Glc4O) to dTDP-4-amino-4,6-dideoxy-D-glucose (dTDP-D-Qui4N). This Escherichia coli protein is dTDP-4-amino-4,6-dideoxy-D-glucose transaminase (vioA).